The primary structure comprises 387 residues: Oxidase FUB9 (387 aa).

The disordered stretch occupies residues 1–20 (MSRTNLPIQPAKMSDATSSK). Residues 18–379 (SSKPQIFSIQ…TPAHLSILNA (362 aa)) enclose the FMN hydroxy acid dehydrogenase domain. Tyrosine 44 is an a 2-oxocarboxylate binding site. FMN is bound by residues serine 126, glutamine 150, and threonine 178. Arginine 187 is an a 2-oxocarboxylate binding site. FMN is bound at residue lysine 250. The active-site Proton acceptor is histidine 274. Arginine 277 lines the a 2-oxocarboxylate pocket. FMN is bound by residues 305–309 (DGGFR) and 328–329 (GR).

Belongs to the FMN-dependent alpha-hydroxy acid dehydrogenase family. The cofactor is FMN.

It participates in mycotoxin biosynthesis. Functionally, oxidase; part of the gene cluster that mediates the biosynthesis of fusaric acid, a mycotoxin with low to moderate toxicity to animals and humans, but with high phytotoxic properties. L-aspartate is suggested as fusaric acid amino acid precursor that is activated and further processed to O-acetyl-L-homoserine by cluster enzymes aspartate kinase FUB3 and homoserine O-acetyltransferase FUB5, as well as enzymes of the primary metabolism. The polyketide synthase (PKS) FUB1 generates the triketide trans-2-hexenal which is presumptively released by the hydrolase FUB4 and linked to the NRPS-bound amino acid precursor by NAD(P)-dependent dehydrogenase FUB6. FUB1, FUB4, and the non-canonical NRPS Fub8 may form an enzyme complex. Further processing of the NRPS-bound intermediate might be carried out by FUB6 and the sulfhydrylase FUB7, enabling a spontaneous electrocyclization to close the carbon backbone of fusaric acid. Dihydrofusaric acid is likely to be released via reduction by the thioester reductase (TR) domain of FUB8 whereupon the final oxidation to fusaric acid may (also) be performed by the FMN-dependent dehydrogenase FUB9. The protein is Oxidase FUB9 of Fusarium oxysporum f. sp. lycopersici (strain 4287 / CBS 123668 / FGSC 9935 / NRRL 34936) (Fusarium vascular wilt of tomato).